Consider the following 345-residue polypeptide: Neurotrimin (345 aa).

Positions 1–30 (MGVCGSLFLPWKCLVVVSLRLLFLVPTGVP) are cleaved as a signal peptide. Ig-like C2-type domains are found at residues 39–126 (PKAM…PKTS), 136–218 (PKIV…VKVT), and 222–309 (PPYI…ASIT). N-linked (GlcNAc...) asparagine glycans are attached at residues Asn-44, Asn-70, and Asn-152. A disulfide bridge links Cys-57 with Cys-115. 2 cysteine pairs are disulfide-bonded: Cys-157–Cys-201 and Cys-243–Cys-295. N-linked (GlcNAc...) asparagine glycosylation is found at Asn-284, Asn-292, Asn-305, and Asn-321. The GPI-anchor amidated asparagine moiety is linked to residue Asn-321. The propeptide at 322–345 (GTSSRRAGCLWLLPLLVLHLLLKF) is removed in mature form.

The protein belongs to the immunoglobulin superfamily. IgLON family.

Its subcellular location is the cell membrane. Its function is as follows. Neural cell adhesion molecule. In Bos taurus (Bovine), this protein is Neurotrimin (NTM).